We begin with the raw amino-acid sequence, 173 residues long: Anti-CBASS protein Acb1 (173 aa).

Tyr17 is a binding site for 3',3'-cGAMP. 3',3'-cUAMP is bound at residue Tyr17. Catalysis depends on residues His49, Thr51, His118, and Thr120. Glu151 provides a ligand contact to 3',3'-cGAMP. 3',3'-cUAMP is bound at residue Glu151.

It belongs to the anti-CBASS protein Acb1 family.

The catalysed reaction is 3',3'-cUAMP + H2O = U[3'-5']pAp[3'] + H(+). It carries out the reaction 3',3',3'-c-tri-AMP + H2O = A[3'-5']pA[3'-5']pAp[3'] + H(+). It catalyses the reaction 3',3',3'-cAAG + H2O = G[3'-5']pA[3'-5']pAp[3'] + H(+). The enzyme catalyses 3',3',3'-cAAG + H2O = A[3'-5']pG[3'-5']pAp[3'] + H(+). The catalysed reaction is 3',3'-cGAMP + H2O = G[3'-5']pAp[3'] + H(+). Counteracts the host CBASS antiviral defense system. Phosphodiesterase that enables metal-independent hydrolysis of the host cyclic di- and trinucleotide CBASS signals such as 3'3'-cGAMP, 3'3'cUA, and 3'3'3'-cAAA. Does not cleave cGG or cA4. Besides evasion of the CBASS system, might also enable evasion of the type III CRISPR systems that use cA3 signals. This Escherichia phage RB16 protein is Anti-CBASS protein Acb1.